The sequence spans 865 residues: Alanine--tRNA ligase (865 aa).

The Zn(2+) site is built by His552, His556, Cys654, and His658.

This sequence belongs to the class-II aminoacyl-tRNA synthetase family. Requires Zn(2+) as cofactor.

The protein resides in the cytoplasm. The enzyme catalyses tRNA(Ala) + L-alanine + ATP = L-alanyl-tRNA(Ala) + AMP + diphosphate. Catalyzes the attachment of alanine to tRNA(Ala) in a two-step reaction: alanine is first activated by ATP to form Ala-AMP and then transferred to the acceptor end of tRNA(Ala). Also edits incorrectly charged Ser-tRNA(Ala) and Gly-tRNA(Ala) via its editing domain. The protein is Alanine--tRNA ligase of Coxiella burnetii (strain RSA 331 / Henzerling II).